We begin with the raw amino-acid sequence, 99 residues long: Class II hydrophobin 1 (99 aa).

Residues 1 to 26 (MKFIAVVAALTASLAMAAPTESSTDT) form the signal peptide. 4 cysteine pairs are disulfide-bonded: cysteine 31–cysteine 80, cysteine 41–cysteine 71, cysteine 42–cysteine 54, and cysteine 81–cysteine 92.

Belongs to the cerato-ulmin hydrophobin family. Homotetramer. Further self-assembles to form highly ordered films at water-air interfaces through intermolecular interactions.

The protein localises to the secreted. It localises to the cell wall. Aerial growth, conidiation, and dispersal of filamentous fungi in the environment rely upon a capability of their secreting small amphipathic proteins called hydrophobins (HPBs) with low sequence identity. Class I can self-assemble into an outermost layer of rodlet bundles on aerial cell surfaces, conferring cellular hydrophobicity that supports fungal growth, development and dispersal; whereas Class II form highly ordered films at water-air interfaces through intermolecular interactions but contribute nothing to the rodlet structure. HFB1 is a class II hydrophobin that shows antifungal activity against pathogenic and opportunistic fungi such as Cryptococcus neoformans, Nakaseomyces glabrataa, or Candida tropicalis. The polypeptide is Class II hydrophobin 1 (Sodiomyces alkalinus (strain CBS 110278 / VKM F-3762 / F11) (Alkaliphilic filamentous fungus)).